We begin with the raw amino-acid sequence, 1071 residues long: DNA-directed RNA polymerase subunit beta (1071 aa).

The protein belongs to the RNA polymerase beta chain family. In plastids the minimal PEP RNA polymerase catalytic core is composed of four subunits: alpha, beta, beta', and beta''. When a (nuclear-encoded) sigma factor is associated with the core the holoenzyme is formed, which can initiate transcription.

It is found in the plastid. The protein localises to the chloroplast. It catalyses the reaction RNA(n) + a ribonucleoside 5'-triphosphate = RNA(n+1) + diphosphate. Its function is as follows. DNA-dependent RNA polymerase catalyzes the transcription of DNA into RNA using the four ribonucleoside triphosphates as substrates. In Acorus calamus (Sweet flag), this protein is DNA-directed RNA polymerase subunit beta.